A 176-amino-acid polypeptide reads, in one-letter code: RNA pyrophosphohydrolase (176 aa).

A Nudix hydrolase domain is found at 6–149 (GYRPNVGIVI…KRDVYRRVMK (144 aa)). The short motif at 38-59 (GGINPGESAEQAMYRELFEEVG) is the Nudix box element.

This sequence belongs to the Nudix hydrolase family. RppH subfamily. A divalent metal cation serves as cofactor.

Accelerates the degradation of transcripts by removing pyrophosphate from the 5'-end of triphosphorylated RNA, leading to a more labile monophosphorylated state that can stimulate subsequent ribonuclease cleavage. The polypeptide is RNA pyrophosphohydrolase (Salmonella paratyphi C (strain RKS4594)).